The chain runs to 304 residues: Protein Largen (304 aa).

Over residues 1–22 (MSAKSKGNPSSSSAAEGPPAAS) the composition is skewed to low complexity. 4 disordered regions span residues 1–27 (MSAK…TKVK), 66–109 (QLED…PPAH), 114–133 (LTVL…TPVR), and 236–304 (EPVH…TTTV). Residues 33–70 (IVEDLELVLGDLKDVAKELKEVVDQIDTLTSDLQLEDE) adopt a coiled-coil conformation. Positions 77-91 (TDTLNSSSSGTTASS) are enriched in low complexity. 2 stretches are compositionally biased toward pro residues: residues 120–129 (PNPPPPPPRL) and 275–289 (FPPP…PAAP).

Its function is as follows. Regulator of cell size that promotes cell size increase independently of mTOR and Hippo signaling pathways. Acts by stimulating the translation of specific mRNAs, including those encoding proteins affecting mitochondrial functions. Increases mitochondrial mass and respiration. The sequence is that of Protein Largen (Prr16) from Mus musculus (Mouse).